A 226-amino-acid polypeptide reads, in one-letter code: Probable N-acetyl-alpha-D-glucosaminyl L-malate deacetylase 2 (226 aa).

Zn(2+)-binding residues include histidine 13, aspartate 16, and histidine 127.

The protein belongs to the PIGL family. Requires Zn(2+) as cofactor.

It catalyses the reaction (S)-malyl N-acetyl-alpha-D-glucosaminide + H2O = (S)-malyl alpha-D-glucosaminide + acetate. Functionally, involved in bacillithiol (BSH) biosynthesis. Catalyzes the second step of the pathway, the deacetylation of N-acetylglucosaminylmalate (GlcNAc-Mal) to glucosamine malate (GlcN-Mal). Could also be involved in bacillithiol-detoxifying pathways through formation of S-mercapturic adducts. This Bacillus anthracis protein is Probable N-acetyl-alpha-D-glucosaminyl L-malate deacetylase 2.